The primary structure comprises 671 residues: DNA ligase (671 aa).

NAD(+) is bound by residues 32-36 (DAEYD), 81-82 (SL), and glutamate 113. Lysine 115 serves as the catalytic N6-AMP-lysine intermediate. Residues arginine 136, glutamate 173, lysine 290, and lysine 314 each coordinate NAD(+). Positions 408, 411, 426, and 432 each coordinate Zn(2+). Positions 593–671 (EIDSPFAGKT…EAEMIRLLGA (79 aa)) constitute a BRCT domain.

This sequence belongs to the NAD-dependent DNA ligase family. LigA subfamily. Mg(2+) is required as a cofactor. Requires Mn(2+) as cofactor.

It carries out the reaction NAD(+) + (deoxyribonucleotide)n-3'-hydroxyl + 5'-phospho-(deoxyribonucleotide)m = (deoxyribonucleotide)n+m + AMP + beta-nicotinamide D-nucleotide.. DNA ligase that catalyzes the formation of phosphodiester linkages between 5'-phosphoryl and 3'-hydroxyl groups in double-stranded DNA using NAD as a coenzyme and as the energy source for the reaction. It is essential for DNA replication and repair of damaged DNA. This chain is DNA ligase, found in Salmonella typhimurium (strain LT2 / SGSC1412 / ATCC 700720).